Here is a 441-residue protein sequence, read N- to C-terminus: Glutamate-1-semialdehyde 2,1-aminomutase (441 aa).

K276 bears the N6-(pyridoxal phosphate)lysine mark.

This sequence belongs to the class-III pyridoxal-phosphate-dependent aminotransferase family. HemL subfamily. In terms of assembly, homodimer. The cofactor is pyridoxal 5'-phosphate.

The protein localises to the cytoplasm. It catalyses the reaction (S)-4-amino-5-oxopentanoate = 5-aminolevulinate. The protein operates within porphyrin-containing compound metabolism; protoporphyrin-IX biosynthesis; 5-aminolevulinate from L-glutamyl-tRNA(Glu): step 2/2. In Rhodococcus jostii (strain RHA1), this protein is Glutamate-1-semialdehyde 2,1-aminomutase.